The chain runs to 195 residues: Segregation and condensation protein B (195 aa).

The protein belongs to the ScpB family. As to quaternary structure, homodimer. Homodimerization may be required to stabilize the binding of ScpA to the Smc head domains. Component of a cohesin-like complex composed of ScpA, ScpB and the Smc homodimer, in which ScpA and ScpB bind to the head domain of Smc. The presence of the three proteins is required for the association of the complex with DNA.

It is found in the cytoplasm. In terms of biological role, participates in chromosomal partition during cell division. May act via the formation of a condensin-like complex containing Smc and ScpA that pull DNA away from mid-cell into both cell halves. This chain is Segregation and condensation protein B, found in Clostridium perfringens (strain ATCC 13124 / DSM 756 / JCM 1290 / NCIMB 6125 / NCTC 8237 / Type A).